The primary structure comprises 563 residues: CDKN2A-interacting protein (563 aa).

Ala2 is subject to N-acetylalanine. Positions 19-126 (VETLRCEGET…KVKKRGISSS (108 aa)) constitute an XRN2-binding (XTBD) domain. Disordered regions lie at residues 122–289 (GISS…LLGS) and 304–351 (SSSE…PSLL). Ser124 is subject to Phosphoserine. The span at 147-160 (VERDHGKKSAKTDR) shows a compositional bias: basic and acidic residues. 2 stretches are compositionally biased toward low complexity: residues 168–216 (SSPS…SSQV) and 234–248 (SASF…SMNS). Lys177 is covalently cross-linked (Glycyl lysine isopeptide (Lys-Gly) (interchain with G-Cter in SUMO1)). Ser234 carries the post-translational modification Phosphoserine. Residues 249–262 (HMTQSTDNRQQSGS) are compositionally biased toward polar residues. Residues 270-280 (GSSGSASQSSS) show a composition bias toward low complexity. Thr340 is subject to Phosphothreonine. Ser371 carries the post-translational modification Phosphoserine. The 76-residue stretch at 445-520 (NHGELLNAAI…SREALKLFLK (76 aa)) folds into the DRBM domain.

This sequence belongs to the CARF family. As to quaternary structure, interacts with CDKN2A/p14ARF, p53/TP53 and MDM2. Interacts with CHEK2 and MAPK3. Interacts with XRN2. May be ubiquitinated.

The protein localises to the nucleus. It localises to the nucleoplasm. In terms of biological role, regulates DNA damage response and cell proliferation in a dose-dependent manner through a number of signaling pathways involved in cell proliferation, apoptosis and senescence. This is CDKN2A-interacting protein (Cdkn2aip) from Mus musculus (Mouse).